Consider the following 79-residue polypeptide: Small ribosomal subunit protein bS18 (79 aa).

It belongs to the bacterial ribosomal protein bS18 family. As to quaternary structure, part of the 30S ribosomal subunit. Forms a tight heterodimer with protein bS6.

In terms of biological role, binds as a heterodimer with protein bS6 to the central domain of the 16S rRNA, where it helps stabilize the platform of the 30S subunit. The protein is Small ribosomal subunit protein bS18 of Streptococcus thermophilus (strain CNRZ 1066).